Reading from the N-terminus, the 130-residue chain is Methylglyoxal synthase (130 aa).

Positions 1-130 (MSKPRIALIA…DLARNMQDVC (130 aa)) constitute an MGS-like domain. Residues His11, Lys15, 37–40 (TGTT), and 57–58 (SG) each bind substrate. Asp63 functions as the Proton donor/acceptor in the catalytic mechanism. His90 provides a ligand contact to substrate.

This sequence belongs to the methylglyoxal synthase family.

The catalysed reaction is dihydroxyacetone phosphate = methylglyoxal + phosphate. Its function is as follows. Catalyzes the formation of methylglyoxal from dihydroxyacetone phosphate. The sequence is that of Methylglyoxal synthase from Burkholderia orbicola (strain AU 1054).